A 224-amino-acid chain; its full sequence is Putative adhesin RF_1314 (224 aa).

A signal peptide spans Met-1 to Ala-22.

This is Putative adhesin RF_1314 from Rickettsia felis (strain ATCC VR-1525 / URRWXCal2) (Rickettsia azadi).